Here is a 346-residue protein sequence, read N- to C-terminus: Quinolinate synthase (346 aa).

His-47 and Ser-68 together coordinate iminosuccinate. Cys-113 provides a ligand contact to [4Fe-4S] cluster. Residues 139-141 (YAN) and Ser-156 contribute to the iminosuccinate site. Cys-200 provides a ligand contact to [4Fe-4S] cluster. Residues 226–228 (HPE) and Thr-243 contribute to the iminosuccinate site. Position 297 (Cys-297) interacts with [4Fe-4S] cluster.

This sequence belongs to the quinolinate synthase family. Type 1 subfamily. It depends on [4Fe-4S] cluster as a cofactor.

It is found in the cytoplasm. The enzyme catalyses iminosuccinate + dihydroxyacetone phosphate = quinolinate + phosphate + 2 H2O + H(+). It functions in the pathway cofactor biosynthesis; NAD(+) biosynthesis; quinolinate from iminoaspartate: step 1/1. In terms of biological role, catalyzes the condensation of iminoaspartate with dihydroxyacetone phosphate to form quinolinate. In Pseudoalteromonas translucida (strain TAC 125), this protein is Quinolinate synthase.